A 375-amino-acid polypeptide reads, in one-letter code: MALSAVQKVVLFSCLVLCVSLLLPRAYIARGKPAAQEGNTGLFQSSGHHPKPTDGRPGGAHFPRSHMAEAMSKAKGGTGGGGGGGTRPSLVGQIIPIYGFGILLYILYILFKLSSKGKSTKQEPTTQPVANGNLKRKITDYELSQLQDKLKETEEAMEKIISRLGPNSERTDNVSSDEETDLLQRLKEITRVMKEGKILDGISPEKEAEEAPYMEDWNGYPEETYPVYDPSDCKRTQQTILVDCSALNRPSAEQVAEQMGFDEEDDQENGSGNLAKEPDYKDSVGGDQQAQGTISAQGKVVGTGEDIEEDEDEDEDPEVIAENAGFISDSCNEEEDPKESFMDLGNEKGPLGATLGSNRDETGTLRKRNTKGIEY.

An N-terminal signal peptide occupies residues 1-29 (MALSAVQKVVLFSCLVLCVSLLLPRAYIA). Over 30–90 (RGKPAAQEGN…GGGGGTRPSL (61 aa)) the chain is Lumenal. The span at 38-47 (GNTGLFQSSG) shows a compositional bias: polar residues. A disordered region spans residues 38–63 (GNTGLFQSSGHHPKPTDGRPGGAHFP). Residues 91–111 (VGQIIPIYGFGILLYILYILF) form a helical membrane-spanning segment. The Cytoplasmic portion of the chain corresponds to 112-375 (KLSSKGKSTK…RKRNTKGIEY (264 aa)). The stretch at 135-165 (KRKITDYELSQLQDKLKETEEAMEKIISRLG) forms a coiled coil. The segment at 251–375 (SAEQVAEQMG…RKRNTKGIEY (125 aa)) is disordered. Over residues 286-296 (GDQQAQGTISA) the composition is skewed to polar residues. Over residues 305 to 319 (EDIEEDEDEDEDPEV) the composition is skewed to acidic residues. Over residues 365–375 (LRKRNTKGIEY) the composition is skewed to basic residues.

Belongs to the ric-3 family.

It localises to the endoplasmic reticulum membrane. Functionally, molecular chaperone which facilitates proper subunit assembly andsurface trafficking of alpha-7 (CHRNA7) and alpha-8 (CHRNA8) nicotinic acetylcholine receptors. May also promote functional expression of homomeric serotoninergic 5-HT3 receptors, and of heteromeric acetylcholine receptors. This chain is Protein RIC-3 (ric3), found in Xenopus tropicalis (Western clawed frog).